The sequence spans 681 residues: DNA ligase (681 aa).

NAD(+) is bound by residues 35-39 (DAEYD), 84-85 (SL), and Glu-115. The active-site N6-AMP-lysine intermediate is Lys-117. 4 residues coordinate NAD(+): Arg-138, Glu-175, Lys-293, and Lys-317. Positions 411, 414, 429, and 435 each coordinate Zn(2+). Residues 598-681 (RTNLAVPGKT…SLLRDTSSSE (84 aa)) enclose the BRCT domain.

The protein belongs to the NAD-dependent DNA ligase family. LigA subfamily. It depends on Mg(2+) as a cofactor. The cofactor is Mn(2+).

It carries out the reaction NAD(+) + (deoxyribonucleotide)n-3'-hydroxyl + 5'-phospho-(deoxyribonucleotide)m = (deoxyribonucleotide)n+m + AMP + beta-nicotinamide D-nucleotide.. Functionally, DNA ligase that catalyzes the formation of phosphodiester linkages between 5'-phosphoryl and 3'-hydroxyl groups in double-stranded DNA using NAD as a coenzyme and as the energy source for the reaction. It is essential for DNA replication and repair of damaged DNA. The chain is DNA ligase from Nitrosomonas europaea (strain ATCC 19718 / CIP 103999 / KCTC 2705 / NBRC 14298).